The sequence spans 312 residues: Salivary protein SG34 (312 aa).

The first 20 residues, 1–20 (MSPSKKILVLLLFPILLVSS), serve as a signal peptide directing secretion. A coiled-coil region spans residues 95–158 (NMEVQLLRES…QEEIEEQTKQ (64 aa)).

It belongs to the salivary protein SG34 family. Female salivary gland (at protein level). Low-level expression in ovary.

Functionally, possible serine protease. Its function is as follows. (Microbial infection) Modulates replication of duck Tembusu virus in salivary glands and virus release into the saliva, probably via the regulation of antimicrobial peptides expression in response to virus infection. In terms of biological role, (Microbial infection) Enhances replication of dengue virus type 2 in human keratinocytes, probably by suppressing the production of type I interferons and antimicrobial peptides in response to virus infection. The sequence is that of Salivary protein SG34 from Aedes aegypti (Yellowfever mosquito).